The following is a 421-amino-acid chain: Pyridinium-3,5-bisthiocarboxylic acid mononucleotide nickel insertion protein (421 aa).

The protein belongs to the LarC family.

The catalysed reaction is Ni(II)-pyridinium-3,5-bisthiocarboxylate mononucleotide = pyridinium-3,5-bisthiocarboxylate mononucleotide + Ni(2+). Involved in the biosynthesis of a nickel-pincer cofactor ((SCS)Ni(II) pincer complex). Binds Ni(2+), and functions in nickel delivery to pyridinium-3,5-bisthiocarboxylic acid mononucleotide (P2TMN), to form the mature cofactor. Is thus probably required for the activation of nickel-pincer cofactor-dependent enzymes. The polypeptide is Pyridinium-3,5-bisthiocarboxylic acid mononucleotide nickel insertion protein (Alkaliphilus metalliredigens (strain QYMF)).